The chain runs to 444 residues: Serine carboxypeptidase 2 (444 aa).

A substrate-binding site is contributed by 60–62 (NGG). 3 disulfides stabilise this stretch: Cys65/Cys324, Cys222/Cys234, and Cys258/Cys291. N-linked (GlcNAc...) asparagine glycans are attached at residues Asn116 and Asn127. 157–159 (ESY) is a substrate binding site. The active site involves Ser158. The N-linked (GlcNAc...) asparagine glycan is linked to Asn259. A propeptide spans 260-286 (ITSSSSSSSSSLSQQRRSRGRYPWLTG) (linker peptide). 2 N-linked (GlcNAc...) asparagine glycosylation sites follow: Asn312 and Asn318. Residues Asp361 and His413 contribute to the active site. Position 409–413 (409–413 (RGAGH)) interacts with substrate.

This sequence belongs to the peptidase S10 family. Carboxypeptidase II is a dimer, where each monomer is composed of two chains linked by a disulfide bond. In terms of processing, N-glycosylated.

The enzyme catalyses Preferential release of a C-terminal arginine or lysine residue.. The sequence is that of Serine carboxypeptidase 2 (CBP2) from Triticum aestivum (Wheat).